Reading from the N-terminus, the 92-residue chain is Small ribosomal subunit protein uS19 (92 aa).

This sequence belongs to the universal ribosomal protein uS19 family.

Functionally, protein S19 forms a complex with S13 that binds strongly to the 16S ribosomal RNA. The polypeptide is Small ribosomal subunit protein uS19 (Lachnoclostridium phytofermentans (strain ATCC 700394 / DSM 18823 / ISDg) (Clostridium phytofermentans)).